The primary structure comprises 344 residues: Outer membrane protein B (344 aa).

A signal peptide spans 1–30 (MNSKMLKHLRLATLSFSMFFGIVSSPAVYA).

The protein belongs to the chlamydial OMP family.

The protein resides in the cell outer membrane. The polypeptide is Outer membrane protein B (ompB) (Chlamydia pneumoniae (Chlamydophila pneumoniae)).